Here is a 260-residue protein sequence, read N- to C-terminus: MGSLTSVDKSRIRQAFQKALNDYDRHALIQQKMTINLMAHLQDYLPNGSLDSVLELGCGSGMLSSLLQKQISADYWLFNDLCDVQTQLAEKLPQSFDFYCGDAEHFLFLQQFDLIASASAVQWFHQPDAFIAHCKTGLKTNGLLAVATFGEDNLKEVRQITNIGLNYPTLSQWQTWLAKDFELLWCEDFKVILDFDTPLDVLKHLKYTGVTATNQKNWTRKNLNGFIGDYLSAFGMPSGKVRLTYHPLFFIARYSHIENQ.

This sequence belongs to the methyltransferase superfamily.

The enzyme catalyses malonyl-[ACP] + S-adenosyl-L-methionine = malonyl-[ACP] methyl ester + S-adenosyl-L-homocysteine. Its pathway is cofactor biosynthesis; biotin biosynthesis. Converts the free carboxyl group of a malonyl-thioester to its methyl ester by transfer of a methyl group from S-adenosyl-L-methionine (SAM). It allows to synthesize pimeloyl-ACP via the fatty acid synthetic pathway. This Haemophilus influenzae (strain ATCC 51907 / DSM 11121 / KW20 / Rd) protein is Malonyl-[acyl-carrier protein] O-methyltransferase.